Here is a 718-residue protein sequence, read N- to C-terminus: Ubiquitin homeostasis protein lub1 (718 aa).

WD repeat units lie at residues 12–50 (GHKQ…WTPH), 54–98 (NHEG…PSYY), 101–139 (GHES…YVLK), 140–178 (GHQS…KSIL), 180–217 (HNDC…YELH), 218–257 (GHTS…QCIT), and 259–296 (PTTS…VAPT). In terms of domain architecture, PFU spans 353-448 (QWSQKENEWK…QGHSLESKKE (96 aa)). A PUL domain is found at 462–717 (TIFPVSQLLF…VDAEKQILSL (256 aa)).

As to quaternary structure, interacts with cdc48.

It localises to the nucleus. The protein localises to the cytoplasm. Acts as a negative regulator of vacuole-dependent ubiquitin degradation. This Schizosaccharomyces pombe (strain 972 / ATCC 24843) (Fission yeast) protein is Ubiquitin homeostasis protein lub1 (lub1).